The primary structure comprises 270 residues: Protein-ADP-ribose hydrolase (270 aa).

Positions 73–267 (VSVKDCQKTN…LYDTYLQKEN (195 aa)) constitute a Macro domain. ADP-D-ribose-binding residues include Asp92, Ile93, and Asn106. The Zn(2+) site is built by Cys112, His117, and Cys119. The ADP-D-ribose site is built by Cys119, Ile120, Asp121, Ser212, Thr213, Gly214, Glu215, and Phe216.

This sequence belongs to the MacroD-type family. Zn-Macro subfamily. As to quaternary structure, monomer. Interacts with the lipoylated form of GcvH-L. Requires Zn(2+) as cofactor.

The catalysed reaction is 4-O-(ADP-D-ribosyl)-L-aspartyl-[protein] + H2O = L-aspartyl-[protein] + ADP-D-ribose + H(+). It catalyses the reaction 5-O-(ADP-D-ribosyl)-L-glutamyl-[protein] + H2O = L-glutamyl-[protein] + ADP-D-ribose + H(+). The enzyme catalyses S-(ADP-D-ribosyl)-L-cysteinyl-[protein] + H2O = ADP-D-ribose + L-cysteinyl-[protein]. Functionally, ADP-ribosylhydrolase that specifically reverses the SirTM-mediated mono-ADP-ribosylation at an asparatate residue of GcvH-L (SpyM50867), by releasing ADP-ribose from the target protein. May play a role in the regulation of the response to host-induced oxidative stress. It can also hydrolyze ADP-ribosyl-glutamate bonds and ADP-ribosyl-cysteine bonds. In vitro, it can remove the ADP-ribosyl modification from the human mono-ADP-ribosylated PARP1 E988Q mutant, which is primarily modified on glutamate site with only minor aspartate contribution. It can also hydrolyze the ADP-ribosyl-cysteinyl glycosidic bond of a Cys-ADP-ribosylated synthetic peptide. The sequence is that of Protein-ADP-ribose hydrolase from Streptococcus pyogenes serotype M5 (strain Manfredo).